Consider the following 282-residue polypeptide: Bifunctional protein FolD (282 aa).

Residues 166–168 and I232 each bind NADP(+); that span reads GAS.

It belongs to the tetrahydrofolate dehydrogenase/cyclohydrolase family. In terms of assembly, homodimer.

The catalysed reaction is (6R)-5,10-methylene-5,6,7,8-tetrahydrofolate + NADP(+) = (6R)-5,10-methenyltetrahydrofolate + NADPH. It catalyses the reaction (6R)-5,10-methenyltetrahydrofolate + H2O = (6R)-10-formyltetrahydrofolate + H(+). It functions in the pathway one-carbon metabolism; tetrahydrofolate interconversion. In terms of biological role, catalyzes the oxidation of 5,10-methylenetetrahydrofolate to 5,10-methenyltetrahydrofolate and then the hydrolysis of 5,10-methenyltetrahydrofolate to 10-formyltetrahydrofolate. The sequence is that of Bifunctional protein FolD from Histophilus somni (strain 129Pt) (Haemophilus somnus).